The primary structure comprises 686 residues: Phosphatidylinositol 4,5-bisphosphate-binding protein SLM1 (686 aa).

Residues 33 to 147 form a disordered region; it reads RSMTSADHAN…KQLQGKNSLT (115 aa). The segment covering 45–63 has biased composition (low complexity); the sequence is QQQQQQQQQQQQQQQQQQQ. A compositionally biased stretch (polar residues) spans 64–126; that stretch reads SASFQNGSLT…PNIDSNTNVT (63 aa). A compositionally biased stretch (low complexity) spans 133–144; the sequence is NNNNGKQLQGKN. 3 positions are modified to phosphoserine: Ser145, Ser150, and Ser153. Residues 157-172 show a composition bias toward low complexity; the sequence is SSLQRQRLAQQQQQQQ. Positions 157-176 are disordered; the sequence is SSLQRQRLAQQQQQQQDPRS. Residues 296–381 are a coiled coil; that stretch reads RLEDLRRDLI…FLHEAFDNLE (86 aa). Residues 468 to 581 form the PH domain; it reads YEIKSGFLER…WFDNLKILTS (114 aa). Positions 626 to 669 are disordered; that stretch reads VENDENDDINSNYVGSTVTPKLDNQTNTNTSMSSLPDTNDSELQ. Positions 634-663 are enriched in polar residues; sequence INSNYVGSTVTPKLDNQTNTNTSMSSLPDT. The PXIXIT-like, required for interaction with CNA1 and CNA2, and calcineurin-dependent dephosphorylation motif lies at 673–678; that stretch reads PNIYIQ.

As to quaternary structure, heterodimer of SLM1-SLM2. Binds phosphatidylinositol 4,5-bisphosphate, which is required for function. Interacts with the TORC2 subunits AVO2, BIT61 and TOR2. Interacts with the calcineurin catalytic subunits CNA1 and CNA2. Post-translationally, phosphorylated by the target of rapamycin complex 2 (TORC2) and dephosphorylated by serine/threonine-protein phosphatase 2B (calcineurin). Dephosphorylated in response to the disruption or inhibition of sphingolipid synthesis.

The protein resides in the cell membrane. Functionally, together with SLM2, acts as an effector of the TORC2- and calcineurin-signaling pathways. Phosphorylated and activated by TORC2 under favorable growth conditions. Mediates actin polarization via inhibition of calcineurin-dependent transcription. Upon nutrient limitation or environmental stress, gets dephosphorylated by calcineurin. Dephosphorylation inhibits its interaction with TORC2, thereby antagonizing TORC2 signaling and mediating calcineurin-dependent actin depolarization. May play a role in the response to the disruption of sphingolipid synthesis, where dephosphorylation of SLM1 leads to the activation and phosphorylation of YPK1 through the TORC2 and PKH1 pathways, which in turn phosphorylates ORM1 and LAG1 to activate sphingolipid synthesis. Also functions in heat-induced, calcineurin-mediated uracil permease (FUR4) endocytosis. The polypeptide is Phosphatidylinositol 4,5-bisphosphate-binding protein SLM1 (SLM1) (Saccharomyces cerevisiae (strain ATCC 204508 / S288c) (Baker's yeast)).